We begin with the raw amino-acid sequence, 800 residues long: Ion-translocating oxidoreductase complex subunit C (800 aa).

4Fe-4S ferredoxin-type domains lie at 367–398 and 408–437; these read DEFSVPQAEQPCIRCGACADVCPARLLPQQLY and KARGYHLQECIECGACAYVCPSNIPLVQYY. [4Fe-4S] cluster-binding residues include Cys378, Cys381, Cys384, Cys388, Cys417, Cys420, Cys423, and Cys427. Low complexity-rich tracts occupy residues 536-553, 571-583, 599-617, 647-667, and 675-690; these read GATPAPAATDSDAAAPAP, AKQAGATPAPAAT, AAIARAKAKQAGATPAPAA, AKQAGATPAPATTDSDAADPA, and AAIAAAIARAKAKQAA. Disordered stretches follow at residues 536–558, 571–631, and 647–706; these read GATPAPAATDSDAAAPAPQDDPR, AKQA…QDDP, and AKQA…ENTD. The segment covering 693-705 has biased composition (polar residues); sequence HATTEPVTVQENT.

This sequence belongs to the 4Fe4S bacterial-type ferredoxin family. RnfC subfamily. As to quaternary structure, the complex is composed of six subunits: RnfA, RnfB, RnfC, RnfD, RnfE and RnfG. The cofactor is [4Fe-4S] cluster.

It localises to the cell inner membrane. Part of a membrane-bound complex that couples electron transfer with translocation of ions across the membrane. The sequence is that of Ion-translocating oxidoreductase complex subunit C from Edwardsiella ictaluri (strain 93-146).